The sequence spans 158 residues: Cytochrome c-type biogenesis protein CcmE (158 aa).

Over Met1–Arg8 the chain is Cytoplasmic. A helical; Signal-anchor for type II membrane protein transmembrane segment spans residues Leu9 to Ala29. Topologically, residues Leu30 to Arg158 are periplasmic. Heme contacts are provided by His123 and Tyr127. The interval Ala139–Arg158 is disordered.

This sequence belongs to the CcmE/CycJ family.

It is found in the cell inner membrane. Functionally, heme chaperone required for the biogenesis of c-type cytochromes. Transiently binds heme delivered by CcmC and transfers the heme to apo-cytochromes in a process facilitated by CcmF and CcmH. This Maricaulis maris (strain MCS10) (Caulobacter maris) protein is Cytochrome c-type biogenesis protein CcmE.